Here is a 300-residue protein sequence, read N- to C-terminus: tRNA-cytidine(32) 2-sulfurtransferase (300 aa).

A PP-loop motif motif is present at residues 57–62 (SGGKDS). Residues Cys-132, Cys-135, and Cys-223 each contribute to the [4Fe-4S] cluster site.

The protein belongs to the TtcA family. As to quaternary structure, homodimer. The cofactor is Mg(2+). It depends on [4Fe-4S] cluster as a cofactor.

It localises to the cytoplasm. It carries out the reaction cytidine(32) in tRNA + S-sulfanyl-L-cysteinyl-[cysteine desulfurase] + AH2 + ATP = 2-thiocytidine(32) in tRNA + L-cysteinyl-[cysteine desulfurase] + A + AMP + diphosphate + H(+). It functions in the pathway tRNA modification. Functionally, catalyzes the ATP-dependent 2-thiolation of cytidine in position 32 of tRNA, to form 2-thiocytidine (s(2)C32). The sulfur atoms are provided by the cysteine/cysteine desulfurase (IscS) system. In Xanthomonas campestris pv. campestris (strain B100), this protein is tRNA-cytidine(32) 2-sulfurtransferase.